Consider the following 503-residue polypeptide: ATP synthase subunit alpha (503 aa).

Glycine 169–threonine 176 lines the ATP pocket.

The protein belongs to the ATPase alpha/beta chains family. F-type ATPases have 2 components, CF(1) - the catalytic core - and CF(0) - the membrane proton channel. CF(1) has five subunits: alpha(3), beta(3), gamma(1), delta(1), epsilon(1). CF(0) has three main subunits: a(1), b(2) and c(9-12). The alpha and beta chains form an alternating ring which encloses part of the gamma chain. CF(1) is attached to CF(0) by a central stalk formed by the gamma and epsilon chains, while a peripheral stalk is formed by the delta and b chains.

The protein localises to the cell membrane. The enzyme catalyses ATP + H2O + 4 H(+)(in) = ADP + phosphate + 5 H(+)(out). Its function is as follows. Produces ATP from ADP in the presence of a proton gradient across the membrane. The alpha chain is a regulatory subunit. The polypeptide is ATP synthase subunit alpha (Lactobacillus johnsonii (strain CNCM I-12250 / La1 / NCC 533)).